A 357-amino-acid chain; its full sequence is Fructose-1,6-bisphosphatase class 1 2 (357 aa).

Mg(2+) contacts are provided by E90, D112, L114, and D115. Substrate contacts are provided by residues 115-118 (DGSS) and N206. Mg(2+) is bound at residue E278.

This sequence belongs to the FBPase class 1 family. In terms of assembly, homotetramer. Requires Mg(2+) as cofactor.

The protein localises to the cytoplasm. It carries out the reaction beta-D-fructose 1,6-bisphosphate + H2O = beta-D-fructose 6-phosphate + phosphate. The protein operates within carbohydrate biosynthesis; gluconeogenesis. This chain is Fructose-1,6-bisphosphatase class 1 2, found in Dechloromonas aromatica (strain RCB).